The sequence spans 314 residues: Probable carboxylesterase 2 (314 aa).

Positions histidine 79–glycine 81 match the Involved in the stabilization of the negatively charged intermediate by the formation of the oxyanion hole motif. Active-site residues include serine 158, aspartate 254, and histidine 286.

Belongs to the 'GDXG' lipolytic enzyme family. In terms of tissue distribution, expressed in roots and flowers.

The catalysed reaction is a carboxylic ester + H2O = an alcohol + a carboxylate + H(+). In terms of biological role, carboxylesterase acting on esters with varying acyl chain length. This chain is Probable carboxylesterase 2 (CXE2), found in Arabidopsis thaliana (Mouse-ear cress).